We begin with the raw amino-acid sequence, 555 residues long: Oxygen-dependent choline dehydrogenase (555 aa).

An FAD-binding site is contributed by aspartate 4–glutamate 33. Positions glutamine 180–arginine 202 are disordered. Residue histidine 473 is the Proton acceptor of the active site.

This sequence belongs to the GMC oxidoreductase family. It depends on FAD as a cofactor.

The enzyme catalyses choline + A = betaine aldehyde + AH2. It catalyses the reaction betaine aldehyde + NAD(+) + H2O = glycine betaine + NADH + 2 H(+). It participates in amine and polyamine biosynthesis; betaine biosynthesis via choline pathway; betaine aldehyde from choline (cytochrome c reductase route): step 1/1. Functionally, involved in the biosynthesis of the osmoprotectant glycine betaine. Catalyzes the oxidation of choline to betaine aldehyde and betaine aldehyde to glycine betaine at the same rate. This Serratia proteamaculans (strain 568) protein is Oxygen-dependent choline dehydrogenase.